The following is a 173-amino-acid chain: Shikimate kinase (173 aa).

16–21 (GSGKTT) contributes to the ATP binding site. Thr20 provides a ligand contact to Mg(2+). Substrate contacts are provided by Asp38, Arg62, and Gly83. Residue Arg120 participates in ATP binding. Arg139 contacts substrate. Arg156 is a binding site for ATP.

It belongs to the shikimate kinase family. Monomer. Mg(2+) is required as a cofactor.

It is found in the cytoplasm. The catalysed reaction is shikimate + ATP = 3-phosphoshikimate + ADP + H(+). It functions in the pathway metabolic intermediate biosynthesis; chorismate biosynthesis; chorismate from D-erythrose 4-phosphate and phosphoenolpyruvate: step 5/7. Catalyzes the specific phosphorylation of the 3-hydroxyl group of shikimic acid using ATP as a cosubstrate. This is Shikimate kinase from Corynebacterium diphtheriae (strain ATCC 700971 / NCTC 13129 / Biotype gravis).